The sequence spans 626 residues: Janus kinase and microtubule-interacting protein 1 (626 aa).

The interval 1 to 25 (MSKKGRSKGEKPETETDSVQMANEE) is disordered. The tract at residues 1 to 365 (MSKKGRSKGE…KLKSLTRENV (365 aa)) is mediates association with microtubules. Coiled coils occupy residues 13-255 (ETET…EAER) and 284-413 (ERDV…DDLS). Residues 365–626 (VEMKEKLSAQ…ILFEPKLKFV (262 aa)) form a mediates interaction with TYK2 and GABBR1 region. Residue serine 382 is modified to Phosphoserine. Positions 452 to 461 (ETLSETSYNT) are enriched in polar residues. The tract at residues 452 to 481 (ETLSETSYNTDRTDRTPATPEEDLDETTTR) is disordered. Threonine 470 carries the phosphothreonine modification. A coiled-coil region spans residues 490-604 (QLTREYQALQ…EFRVLELEVR (115 aa)).

Belongs to the JAKMIP family. In terms of assembly, homodimer. Interacts with JAK1 and TYK2. Forms a complex with GABBR1 and KIF5B/kinesin-1. In terms of processing, phosphorylated. As to expression, specifically expressed in brain and testis by spermatogonia, spermatocytes, spermatozoa and Sertoli cells (at protein level).

The protein localises to the cytoplasm. The protein resides in the cytoskeleton. It localises to the membrane. Associates with microtubules and may play a role in the microtubule-dependent transport of the GABA-B receptor. May play a role in JAK1 signaling and regulate microtubule cytoskeleton rearrangements. This is Janus kinase and microtubule-interacting protein 1 (Jakmip1) from Rattus norvegicus (Rat).